A 119-amino-acid polypeptide reads, in one-letter code: uncharacterized protein (119 aa).

The protein to Synechocystis PCC 6803 slr0903.

This is an uncharacterized protein from Methanocaldococcus jannaschii (strain ATCC 43067 / DSM 2661 / JAL-1 / JCM 10045 / NBRC 100440) (Methanococcus jannaschii).